The following is a 251-amino-acid chain: MSFTVVIPARYQSTRLPGKPLADIAGKPMVQWVYEQAIQAGAQDVIIATDDQRVADAVAVFGGKVCMTSPNHESGTERLAEVVQLMGIADDHIVVNVQGDEPLIPPSIIRQVAENLAASSAPMATLGVAITSEEEVFNPNAVKVVTDKEGYALYFSRATIPWDRDAFARGEVLTEHSLMRHIGIYAYRAGFINTYVNWQPSSLEKIECLEQLRVLWYGEKIHVELAKEAPPAGVDTPEDLELVRKIIAAKS.

It belongs to the KdsB family.

Its subcellular location is the cytoplasm. The enzyme catalyses 3-deoxy-alpha-D-manno-oct-2-ulosonate + CTP = CMP-3-deoxy-beta-D-manno-octulosonate + diphosphate. It functions in the pathway nucleotide-sugar biosynthesis; CMP-3-deoxy-D-manno-octulosonate biosynthesis; CMP-3-deoxy-D-manno-octulosonate from 3-deoxy-D-manno-octulosonate and CTP: step 1/1. It participates in bacterial outer membrane biogenesis; lipopolysaccharide biosynthesis. Functionally, activates KDO (a required 8-carbon sugar) for incorporation into bacterial lipopolysaccharide in Gram-negative bacteria. In Vibrio vulnificus (strain YJ016), this protein is 3-deoxy-manno-octulosonate cytidylyltransferase.